The primary structure comprises 178 residues: UPF0114 protein HPSH_00970 (178 aa).

The next 4 helical transmembrane spans lie at 15 to 35, 54 to 74, 102 to 122, and 145 to 165; these read WLLAPLCIAMSLVLVVLGYVF, LVLSALGLVDLLFMAGLVLMV, FNALKLKVSLSIVAISAIFLL, and PIFWQVVIHLVFVCSALLAAV.

The protein belongs to the UPF0114 family.

The protein localises to the cell membrane. In Helicobacter pylori (strain Shi470), this protein is UPF0114 protein HPSH_00970.